Reading from the N-terminus, the 188-residue chain is dITP/XTP pyrophosphatase (188 aa).

Threonine 10 to lysine 15 contacts substrate. The Mg(2+) site is built by glutamate 39 and aspartate 69. The active-site Proton acceptor is aspartate 69. Substrate-binding positions include serine 70, phenylalanine 145–aspartate 148, lysine 168, and histidine 173–arginine 174.

The protein belongs to the HAM1 NTPase family. In terms of assembly, homodimer. Mg(2+) serves as cofactor.

The enzyme catalyses XTP + H2O = XMP + diphosphate + H(+). The catalysed reaction is dITP + H2O = dIMP + diphosphate + H(+). It carries out the reaction ITP + H2O = IMP + diphosphate + H(+). Functionally, pyrophosphatase that catalyzes the hydrolysis of nucleoside triphosphates to their monophosphate derivatives, with a high preference for the non-canonical purine nucleotides XTP (xanthosine triphosphate), dITP (deoxyinosine triphosphate) and ITP. Seems to function as a house-cleaning enzyme that removes non-canonical purine nucleotides from the nucleotide pool, thus preventing their incorporation into DNA/RNA and avoiding chromosomal lesions. The polypeptide is dITP/XTP pyrophosphatase (Ignicoccus hospitalis (strain KIN4/I / DSM 18386 / JCM 14125)).